The primary structure comprises 133 residues: Capsid protein (133 aa).

Belongs to the Leviviricetes capsid protein family. As to quaternary structure, homodimer. The homodimers binds to the viral RNA via an operator hairpin, but also to many other RNA sequences in the viral genome; this interaction probably shifts the virus from the replicative to the assembly phase and ensures specific encapsidation of the viral genome. Interacts with the maturation protein A2.

Its subcellular location is the virion. In terms of biological role, capsid protein self-assembles to form an icosahedral capsid with a T=3 symmetry, about 26 nm in diameter, and consisting of 89 capsid proteins dimers (178 capsid proteins). Involved in viral genome encapsidation through the interaction between a capsid protein dimer and the multiple packaging signals present in the RNA genome. Binding of the capsid proteins to the viral RNA induces a conformational change required for efficient T=3 shell formation. The capsid also contains 1 copy of the A2 maturation protein. Functionally, acts as a translational repressor of viral replicase synthesis late in infection. This latter function is the result of capsid protein interaction with an RNA hairpin which contains the replicase ribosome-binding site. This chain is Capsid protein, found in Escherichia virus Qbeta (Bacteriophage Q-beta).